The chain runs to 148 residues: MAMASDFYLRYYVGHKGKFGHEFLEFEFRPDGKLRYANNSNYKNDVMIRKEAYVHKSVMEELKRIIDDSEITKEDDALWPPPDRVGRQELEIVIGDEHISFTTSKIGSLIDVNQSKDPEGLRVFYYLVQDLKCLVFSLIGLHFKIKPI.

N-acetylalanine is present on Ala-2.

The protein belongs to the mago nashi family. As to quaternary structure, component of the pre-catalytic, catalytic and post-catalytic spliceosome complexes. Heterodimer with RBM8A. Core component of the mRNA splicing-dependent exon junction complex (EJC); the core complex contains CASC3, EIF4A3, MAGOH or MAGOHB, and RBM8A.

The protein localises to the nucleus. Required for pre-mRNA splicing as component of the spliceosome. Plays a redundant role with MAGOH in the exon junction complex and in the nonsense-mediated decay (NMD) pathway. The chain is Protein mago nashi homolog 2 (MAGOHB) from Bos taurus (Bovine).